Here is a 229-residue protein sequence, read N- to C-terminus: Golgi to ER traffic protein 1 (229 aa).

Residues 1–14 are Lumenal-facing; the sequence is MGILAALDLHPYTL. A helical transmembrane segment spans residues 15–34; it reads VVSSFTVLLIQQLVGFIGKS. The Cytoplasmic portion of the chain corresponds to 35 to 122; it reads TIQEFAWLFY…KINSLVGVVL (88 aa). Positions 60–117 form a coiled coil; sequence HTKKQEELHKLNREKRSISAQDEYAKWTKLNRQAEKLTAEVKSLSDDIAKDKSKINSL. Residues 123–143 traverse the membrane as a helical segment; it reads LFLTTLPLWVFRLWFRKSVLF. At 144-167 the chain is on the lumenal side; that stretch reads YLPTGVFPYYVERVLAIPFFASGS. The chain crosses the membrane as a helical span at residues 168–184; it reads VGLTVWMFAVNNVISSV. Residues 185–229 are Cytoplasmic-facing; the sequence is LFLLTFPFKPSVPIPIRQTKVEEVVPESAESKESSPEVIDIADAN. The span at 210 to 219 shows a compositional bias: basic and acidic residues; that stretch reads PESAESKESS. Positions 210–229 are disordered; sequence PESAESKESSPEVIDIADAN.

Belongs to the WRB/GET1 family. As to quaternary structure, component of the Golgi to ER traffic (GET) complex, which is composed of GET1, GET2 and GET3. Within the complex, GET1 and GET2 form a heterotetramer which is stabilized by phosphatidylinositol binding and which binds to the GET3 homodimer.

Its subcellular location is the endoplasmic reticulum membrane. The protein localises to the golgi apparatus membrane. Required for the post-translational delivery of tail-anchored (TA) proteins to the endoplasmic reticulum. Together with GET2, acts as a membrane receptor for soluble GET3, which recognizes and selectively binds the transmembrane domain of TA proteins in the cytosol. The GET complex cooperates with the HDEL receptor ERD2 to mediate the ATP-dependent retrieval of resident ER proteins that contain a C-terminal H-D-E-L retention signal from the Golgi to the ER. This is Golgi to ER traffic protein 1 from Scheffersomyces stipitis (strain ATCC 58785 / CBS 6054 / NBRC 10063 / NRRL Y-11545) (Yeast).